We begin with the raw amino-acid sequence, 491 residues long: Glutamate--tRNA ligase (491 aa).

The 'HIGH' region motif lies at 10–20 (PSPTGYLHIGG). Residues 243-247 (KISKR) carry the 'KMSKS' region motif. Lysine 246 serves as a coordination point for ATP.

Belongs to the class-I aminoacyl-tRNA synthetase family. Glutamate--tRNA ligase type 1 subfamily. As to quaternary structure, monomer.

It localises to the cytoplasm. It catalyses the reaction tRNA(Glu) + L-glutamate + ATP = L-glutamyl-tRNA(Glu) + AMP + diphosphate. Catalyzes the attachment of glutamate to tRNA(Glu) in a two-step reaction: glutamate is first activated by ATP to form Glu-AMP and then transferred to the acceptor end of tRNA(Glu). The sequence is that of Glutamate--tRNA ligase from Desulfotalea psychrophila (strain LSv54 / DSM 12343).